A 328-amino-acid polypeptide reads, in one-letter code: Testis-specific serine/threonine-protein kinase 4 (328 aa).

The 269-residue stretch at 25–293 (YEVGKAIGHG…ILDIIKDSWV (269 aa)) folds into the Protein kinase domain. ATP contacts are provided by residues 31–39 (IGHGSYGSV) and lysine 54. The Proton acceptor role is filled by aspartate 148. Threonine 197 carries the phosphothreonine modification.

This sequence belongs to the protein kinase superfamily. CAMK Ser/Thr protein kinase family. Homodimer. Interacts with HSP90; this interaction stabilizes and activates TSSK4. Interacts with ODF2 (via C-terminus); this interaction promotes ODF2 phosphorylation on 'Ser-95'. May interact with CREM. Interacts with CREB1; this interaction facilitates phosphorylation on 'Ser-133'. Interacts with QRICH2. The cofactor is Mg(2+). In terms of processing, activated by autophosphorylation on Thr-197. ODF2 potentiates the autophosphorylation activity of TSSK4 at Thr-197. Ubiquitinated; HSP90 activity negatively regulates ubiquitination and degradation. Expressed only in the testis.

It is found in the cytoplasmic vesicle. Its subcellular location is the secretory vesicle. The protein localises to the acrosome. The protein resides in the cell projection. It localises to the cilium. It is found in the flagellum. It catalyses the reaction L-seryl-[protein] + ATP = O-phospho-L-seryl-[protein] + ADP + H(+). The catalysed reaction is L-threonyl-[protein] + ATP = O-phospho-L-threonyl-[protein] + ADP + H(+). Its activity is regulated as follows. Activated by phosphorylation on Thr-197. Serine/threonine kinase which is involved in male germ cell development and in mature sperm function. May be involved in the Cre/Creb signaling pathway. Phosphorylates CREB1 on 'Ser-133' in vitro and can stimulate Cre/Creb pathway in cells. Phosphorylates CREM on 'Ser-116' in vitro. Phosphorylates ODF2 on 'Ser-95'. This is Testis-specific serine/threonine-protein kinase 4 from Homo sapiens (Human).